The sequence spans 171 residues: Ribosome maturation factor RimM (171 aa).

One can recognise a PRC barrel domain in the interval 97–170 (EGEYYYHEII…LVTIHVMEGL (74 aa)).

It belongs to the RimM family. Binds ribosomal protein uS19.

Its subcellular location is the cytoplasm. An accessory protein needed during the final step in the assembly of 30S ribosomal subunit, possibly for assembly of the head region. Essential for efficient processing of 16S rRNA. May be needed both before and after RbfA during the maturation of 16S rRNA. It has affinity for free ribosomal 30S subunits but not for 70S ribosomes. The polypeptide is Ribosome maturation factor RimM (Bacillus thuringiensis (strain Al Hakam)).